A 310-amino-acid polypeptide reads, in one-letter code: Transcription factor UNE12 (310 aa).

2 disordered regions span residues 124-156 and 229-253; these read HGQPMQQPPPSAPHQPTSIRPRVRARRGQATDP and SSSVEDETGEGGRTPQPAWEKWSND. A bHLH domain is found at 152–201; the sequence is QATDPHSIAERLRRERIAERIRALQELVPTVNKTDRAAMIDEIVDYVKFL.

Homodimer. In terms of tissue distribution, expressed constitutively in roots, leaves, stems, and flowers.

Its subcellular location is the nucleus. Required for ovule fertilization. The protein is Transcription factor UNE12 (UNE12) of Arabidopsis thaliana (Mouse-ear cress).